We begin with the raw amino-acid sequence, 340 residues long: Phenylalanine--tRNA ligase alpha subunit (340 aa).

A Mg(2+)-binding site is contributed by glutamate 254.

This sequence belongs to the class-II aminoacyl-tRNA synthetase family. Phe-tRNA synthetase alpha subunit type 1 subfamily. In terms of assembly, tetramer of two alpha and two beta subunits. Mg(2+) serves as cofactor.

It localises to the cytoplasm. The enzyme catalyses tRNA(Phe) + L-phenylalanine + ATP = L-phenylalanyl-tRNA(Phe) + AMP + diphosphate + H(+). This chain is Phenylalanine--tRNA ligase alpha subunit, found in Caldicellulosiruptor saccharolyticus (strain ATCC 43494 / DSM 8903 / Tp8T 6331).